We begin with the raw amino-acid sequence, 133 residues long: Large ribosomal subunit protein bL20 (133 aa).

The protein belongs to the bacterial ribosomal protein bL20 family.

Binds directly to 23S ribosomal RNA and is necessary for the in vitro assembly process of the 50S ribosomal subunit. It is not involved in the protein synthesizing functions of that subunit. This is Large ribosomal subunit protein bL20 from Mesorhizobium japonicum (strain LMG 29417 / CECT 9101 / MAFF 303099) (Mesorhizobium loti (strain MAFF 303099)).